The primary structure comprises 3459 residues: uncharacterized protein (3459 aa).

The span at 158-167 (NDDDWIFNED) shows a compositional bias: acidic residues. Disordered regions lie at residues 158 to 230 (NDDD…NNNN) and 400 to 447 (YGYI…NDEK). Over residues 168–184 (DEKKNKNNDGNDNRYDY) the composition is skewed to basic and acidic residues. Residues 185–201 (NDLQNNNNNDNNKYDYN) show a composition bias toward low complexity. Over residues 204–221 (DDEKKNKNNDGDDNKYDY) the composition is skewed to basic and acidic residues. Acidic residues predominate over residues 406-443 (DNDDGDDYNDDNDNDDNYNDDNYNDDNYNDDNYNDDNY). The stretch at 771–851 (VNEKKKGENE…NEMNKDEENE (81 aa)) forms a coiled coil. A helical transmembrane segment spans residues 1059–1079 (LIYMIYLFFTYKKYDLLLMFI). Disordered regions lie at residues 1148–1187 (RRQE…NDYD), 1399–1467 (IPTQ…NDDD), and 1711–1733 (QKKK…NKEN). Basic and acidic residues predominate over residues 1404–1463 (DKNETDEGNKNETDEGDKNETDEGDKNETDEGNKNETEEIYKNETDEGNKNETEEIYKND). The next 2 helical transmembrane spans lie at 2059–2079 (FLLF…IFFF) and 2197–2217 (IIQC…DFLF). Disordered stretches follow at residues 2582 to 2644 (IYKD…DNNN) and 2776 to 2835 (GRIW…DKGD). Acidic residues predominate over residues 2592–2629 (DNNDDDNINDDDNINDDDNINDDDNNNDDDNNNDDNND). The span at 2779 to 2821 (WKREENGEKKKNEKNESEKNERNEKNEKNEKHEKHEKHEKNEK) shows a compositional bias: basic and acidic residues. The stretch at 2785–2820 (GEKKKNEKNESEKNERNEKNEKNEKHEKHEKHEKNE) forms a coiled coil. Transmembrane regions (helical) follow at residues 3229-3249 (LFII…SFIL) and 3296-3316 (LLFF…NINS).

It localises to the membrane. This is an uncharacterized protein from Plasmodium falciparum (isolate 3D7).